The following is a 68-amino-acid chain: Pleurocidin (68 aa).

The first 22 residues, methionine 1–cysteine 22, serve as a signal peptide directing secretion. Residues glycine 48–glutamate 68 constitute a propeptide that is removed on maturation.

It belongs to the pleurocidin family. In terms of tissue distribution, goblet cells.

It localises to the secreted. The protein localises to the membrane. Its function is as follows. Antimicrobial peptide with potent activity against Gram-positive and Gram-negative bacteria. Activity against E.coli and B.subtilis. Weaker activity against L.mucor, s.marcescens and P.aeruginosa. May play a role in innate host defense. The polypeptide is Pleurocidin (ple1) (Pseudopleuronectes americanus (Winter flounder)).